The chain runs to 630 residues: Heat shock cognate 70 kDa protein 3 (630 aa).

Positions 611–630 (FYQGNNNPKPTTTTFNQDLD) are disordered. Positions 615–630 (NNNPKPTTTTFNQDLD) are enriched in low complexity.

It belongs to the heat shock protein 70 family.

May function in protein folding and assembly, and disassembly of protein complexes. The protein is Heat shock cognate 70 kDa protein 3 of Dictyostelium discoideum (Social amoeba).